The following is a 315-amino-acid chain: Leukocidin-S subunit (315 aa).

The signal sequence occupies residues 1–29 (MLKNKILATTLSVSLLAPLANPLLENAKA).

This sequence belongs to the aerolysin family. As to quaternary structure, leukocidin consists of two protein components: F and S.

Functionally, leukocidin causes cytotoxic changes in polymorphonuclear leukocytes. This is Leukocidin-S subunit (lukS) from Staphylococcus aureus.